A 576-amino-acid polypeptide reads, in one-letter code: V-type ATP synthase alpha chain (576 aa).

238–245 is a binding site for ATP; the sequence is GPFGAGKT.

The protein belongs to the ATPase alpha/beta chains family.

The enzyme catalyses ATP + H2O + 4 H(+)(in) = ADP + phosphate + 5 H(+)(out). Produces ATP from ADP in the presence of a proton gradient across the membrane. The V-type alpha chain is a catalytic subunit. This Borrelia duttonii (strain Ly) protein is V-type ATP synthase alpha chain.